We begin with the raw amino-acid sequence, 361 residues long: SUN domain-containing protein 3 (361 aa).

The Nuclear segment spans residues 1–47 (MSGKAKARRAAMFFRGCSEDASGSTSGSTLLSEDENPDTNGVTRSWK). Residues 19–38 (EDASGSTSGSTLLSEDENPD) are disordered. Residues 22–31 (SGSTSGSTLL) show a composition bias toward low complexity. The helical transmembrane segment at 48-69 (IILSTMFTLTFLLVGLLSHQWL) threads the bilayer. The Perinuclear space segment spans residues 70–361 (KETEVPQKSR…RVHGTPGKHI (292 aa)). Residues 103–129 (KEQLELLKKESQTLENNFHKILLLIEQ) adopt a coiled-coil conformation. Positions 197-358 (GASIIEAGTS…YRFRVHGTPG (162 aa)) constitute an SUN domain.

As to quaternary structure, self-associates. Interacts with SYNE1 and SPAG4/SUN4. Proposed to form a spermatogenesis-specific LINC complex with SYNE1 during sperm head formation possibly implicating a SUN domain-based heterotrimer with SPAG4/SUN4 associating with SYNE1.

Its subcellular location is the membrane. It localises to the nucleus envelope. The protein localises to the nucleus inner membrane. Functionally, as a probable component of the LINC (LInker of Nucleoskeleton and Cytoskeleton) complex, involved in the connection between the nuclear lamina and the cytoskeleton. The nucleocytoplasmic interactions established by the LINC complex play an important role in the transmission of mechanical forces across the nuclear envelope and in nuclear movement and positioning. May be involved in nuclear remodeling during sperm head formation in spermatogenesis. A probable SUN3:SYNE1 LINC complex may tether spermatid nuclei to posterior cytoskeletal structures such as the manchette. The protein is SUN domain-containing protein 3 (SUN3) of Macaca fascicularis (Crab-eating macaque).